The primary structure comprises 1250 residues: Bifunctional autolysin (1250 aa).

The first 29 residues, Met1–Ala29, serve as a signal peptide directing secretion. Positions Gly103–Gly138 are enriched in polar residues. Disordered stretches follow at residues Gly103–Asn151 and Ala173–Pro219. Low complexity predominate over residues Ala173–Thr196. Positions Ala199–Lys769 are N-acetylmuramoyl-L-alanine amidase. 7 consecutive GW domains span residues Thr437–Ala511, Ser513–Lys587, Thr606–Ala680, Ser682–Ala756, Thr778–Leu853, Lys855–Ala930, and Ala937–Ile1011. An endo-beta-N-acetylglucosaminidase region spans residues Ala770–Lys1250.

It in the N-terminal section; belongs to the N-acetylmuramoyl-L-alanine amidase 2 family. In the C-terminal section; belongs to the glycosyl hydrolase 73 family. In terms of assembly, oligomer; forms a ring structure at the cell surface which is important for efficient partitioning of daughter cells after cell division. In terms of processing, undergoes proteolytic processing to generate the two extracellular lytic enzymes, probably at the septal region on the cell surface.

It is found in the secreted. The enzyme catalyses Hydrolyzes the link between N-acetylmuramoyl residues and L-amino acid residues in certain cell-wall glycopeptides.. It catalyses the reaction an N(4)-(oligosaccharide-(1-&gt;3)-[oligosaccharide-(1-&gt;6)]-beta-D-Man-(1-&gt;4)-beta-D-GlcNAc-(1-&gt;4)-alpha-D-GlcNAc)-L-asparaginyl-[protein] + H2O = an oligosaccharide-(1-&gt;3)-[oligosaccharide-(1-&gt;6)]-beta-D-Man-(1-&gt;4)-D-GlcNAc + N(4)-(N-acetyl-beta-D-glucosaminyl)-L-asparaginyl-[protein]. Endohydrolysis of the di-N-acetylchitobiosyl unit in high-mannose glycopeptides and glycoproteins containing the -[(Man)5(GlcNAc)2]-Asn structure. One N-acetyl-D-glucosamine residue remains attached to the protein; the rest of the oligosaccharide is released intact. Cleaves the peptidoglycan connecting the daughter cells at the end of the cell division cycle, resulting in the separation of the two newly divided cells. Acts as an autolysin in penicillin-induced lysis. This Staphylococcus aureus (strain MSSA476) protein is Bifunctional autolysin (atl).